A 115-amino-acid polypeptide reads, in one-letter code: Small ribosomal subunit protein bS18c (115 aa).

Positions 91 to 115 are disordered; the sequence is TNALKARTQNKDQKKEKFQINKKKK. Over residues 99-109 the composition is skewed to basic and acidic residues; sequence QNKDQKKEKFQ.

This sequence belongs to the bacterial ribosomal protein bS18 family. As to quaternary structure, part of the 30S ribosomal subunit.

It localises to the plastid. It is found in the chloroplast. This Ipomoea purpurea (Common morning glory) protein is Small ribosomal subunit protein bS18c.